We begin with the raw amino-acid sequence, 73 residues long: MKEKDYWEEAWLTSCTSIHDHHCDCGSWRDHLWTLCALDDADLAAAADIIEREEADGGEDFGFVDGDPGDAGG.

This is an uncharacterized protein from Sus scrofa (Pig).